A 1356-amino-acid polypeptide reads, in one-letter code: Transmembrane protein 94 (1356 aa).

Over 1-64 (MDLKEKHLGE…FLHHSNRCSC (64 aa)) the chain is Cytoplasmic. The chain crosses the membrane as a helical span at residues 65–85 (FHWPGASLMLLAVLLLLGCCG). The Lumenal segment spans residues 86-92 (GQPAGSR). A helical membrane pass occupies residues 93–113 (GVGLVNASALFLLLLLNLVLI). At 114–273 (GRQDRLKRRE…RPVTALDNER (160 aa)) the chain is on the cytoplasmic side. Phosphoserine is present on residues Ser221 and Ser225. A helical membrane pass occupies residues 274 to 294 (FTVQSVMLHYAVPVVLAGFLI). Residues 295–320 (TNALRFIFSAPGVTSWQYTLLQLQVN) are Lumenal-facing. Residues 321-341 (GVLPILPLLFPVLWVLATACG) traverse the membrane as a helical segment. Over 342 to 1092 (EARVLAQMSK…RHATYGIRKC (751 aa)) the chain is Cytoplasmic. A DKQGIL motif is present at residues 417-422 (DKQGIL). Disordered regions lie at residues 439 to 461 (VEPP…FCHP) and 483 to 541 (EQER…ESDP). The span at 440–449 (EPPHSSHEDL) shows a compositional bias: basic and acidic residues. 3 positions are modified to phosphoserine: Ser444, Ser445, and Ser454. Residues 502–511 (HHKAHGRSKH) show a composition bias toward basic residues. Ser513, Ser518, Ser798, and Ser941 each carry phosphoserine. A helical transmembrane segment spans residues 1093–1113 (FLFLLQCQLTLVVIQFLSCLV). The Lumenal segment spans residues 1114-1120 (QLPPLLS). Residues 1121-1141 (TTDILWLSCFCYPLLSISLLG) traverse the membrane as a helical segment. At 1142-1167 (KPPHSSIMSMATGKNLQSIPKKTQHY) the chain is on the cytoplasmic side. A helical membrane pass occupies residues 1168–1188 (FLLCFLLKFSLTISSCLICFG). The Lumenal segment spans residues 1189–1228 (FTLQSFCDSSRDRNLTNCSSVMLPSNDDRAPAWFEDFANG). 2 N-linked (GlcNAc...) asparagine glycosylation sites follow: Asn1202 and Asn1205. The helical transmembrane segment at 1229-1249 (LLSAQKLTAALIVLHTVFISI) threads the bilayer. Residues 1250–1261 (THVHRTKPLWRK) lie on the Cytoplasmic side of the membrane. A helical transmembrane segment spans residues 1262 to 1282 (SPLTNLWWAVTVPVVLLGQVV). Topologically, residues 1283–1306 (QTAVDLQLWTHRDSHVHFGLEDVP) are lumenal. Residues 1307–1327 (LLTWLLGCLSLVLVVVTNEIV) traverse the membrane as a helical segment. The Cytoplasmic portion of the chain corresponds to 1328–1356 (KLHEIRVRVRYQKRQKLQFETKLGMNSPF). The short motif at 1351–1353 (GMN) is the GMN; metal-binding motif element.

As to quaternary structure, forms homooligomers. As to expression, expressed ubiquitously.

Its subcellular location is the endoplasmic reticulum membrane. In terms of biological role, could function in the uptake of Mg(2+) from the cytosol into the endoplasmic reticulum and regulate intracellular Mg(2+) homeostasis. This chain is Transmembrane protein 94, found in Homo sapiens (Human).